The primary structure comprises 147 residues: Large ribosomal subunit protein uL15 (147 aa).

Residues 1–58 (MKLFELKPAPGAKKRPKRVGRGESSGHGKTSTRGHKGQWARSGGGVRPGFEGGQMPLT) are disordered. Over residues 42–52 (SGGGVRPGFEG) the composition is skewed to gly residues.

The protein belongs to the universal ribosomal protein uL15 family. In terms of assembly, part of the 50S ribosomal subunit.

Binds to the 23S rRNA. This chain is Large ribosomal subunit protein uL15, found in Caldicellulosiruptor saccharolyticus (strain ATCC 43494 / DSM 8903 / Tp8T 6331).